We begin with the raw amino-acid sequence, 410 residues long: Putative ankyrin repeat protein FPV240 (410 aa).

ANK repeat units follow at residues 33–62, 66–95, 100–129, 133–162, 166–195, and 200–229; these read NGYS…YPDY, DIES…FIND, KGNT…DTDV, DRFT…CTNI, YGCT…NIDY, and PCVT…DSNI.

The protein is Putative ankyrin repeat protein FPV240 of Vertebrata (FPV).